The sequence spans 546 residues: Chaperonin GroEL (546 aa).

ATP is bound by residues 30 to 33, lysine 51, 87 to 91, glycine 415, 479 to 481, and aspartate 495; these read TLGP, DGTTT, and NAA. Residues 526-546 are disordered; sequence KKDEPAMPAGGGMGGMGGMDF. Over residues 534–546 the composition is skewed to gly residues; it reads AGGGMGGMGGMDF.

This sequence belongs to the chaperonin (HSP60) family. In terms of assembly, forms a cylinder of 14 subunits composed of two heptameric rings stacked back-to-back. Interacts with the co-chaperonin GroES.

The protein localises to the cytoplasm. The catalysed reaction is ATP + H2O + a folded polypeptide = ADP + phosphate + an unfolded polypeptide.. Functionally, together with its co-chaperonin GroES, plays an essential role in assisting protein folding. The GroEL-GroES system forms a nano-cage that allows encapsulation of the non-native substrate proteins and provides a physical environment optimized to promote and accelerate protein folding. The chain is Chaperonin GroEL from Xanthomonas oryzae pv. oryzae (strain MAFF 311018).